Here is a 403-residue protein sequence, read N- to C-terminus: Alkaline protease 1 (403 aa).

A signal peptide spans 1-21 (MLSIKRTLLLLGAVLPAVFGA). A propeptide spanning residues 22 to 125 (PVQETRRAAQ…QIWYLDALTT (104 aa)) is cleaved from the precursor. The Inhibitor I9 domain maps to 36–120 (KYIVTFKPGT…HVEEDQIWYL (85 aa)). Residues 130–403 (PWGLGSISHK…PNKLAYNGNA (274 aa)) form the Peptidase S8 domain. Catalysis depends on charge relay system residues D162 and H193. N-linked (GlcNAc...) asparagine glycans are attached at residues N253 and N307. Catalysis depends on S349, which acts as the Charge relay system. N367 is a glycosylation site (N-linked (GlcNAc...) asparagine).

This sequence belongs to the peptidase S8 family.

The protein resides in the secreted. It carries out the reaction Hydrolysis of proteins with broad specificity, and of Bz-Arg-OEt &gt; Ac-Tyr-OEt. Does not hydrolyze peptide amides.. Its function is as follows. Secreted alkaline protease that allows assimilation of proteinaceous substrates. Acts as a significant virulence factor in invasive aspergillosis. Involved in immune evasion from the human and mice complement systems during infection. Efficiently cleaves important components of the complement cascade such as such as C3, C4, C5, and C1q, as well as IgG, which leads to down-regulation of complement activation at the hyphal surface. This chain is Alkaline protease 1 (alp1), found in Aspergillus fumigatus (strain CBS 144.89 / FGSC A1163 / CEA10) (Neosartorya fumigata).